The following is a 459-amino-acid chain: Argininosuccinate lyase (459 aa).

The protein belongs to the lyase 1 family. Argininosuccinate lyase subfamily.

The protein resides in the cytoplasm. The enzyme catalyses 2-(N(omega)-L-arginino)succinate = fumarate + L-arginine. Its pathway is amino-acid biosynthesis; L-arginine biosynthesis; L-arginine from L-ornithine and carbamoyl phosphate: step 3/3. The polypeptide is Argininosuccinate lyase (Prochlorococcus marinus (strain MIT 9515)).